A 158-amino-acid polypeptide reads, in one-letter code: Transcription elongation factor GreB (158 aa).

Belongs to the GreA/GreB family. GreB subfamily.

Necessary for efficient RNA polymerase transcription elongation past template-encoded arresting sites. The arresting sites in DNA have the property of trapping a certain fraction of elongating RNA polymerases that pass through, resulting in locked ternary complexes. Cleavage of the nascent transcript by cleavage factors such as GreA or GreB allows the resumption of elongation from the new 3'terminus. GreB releases sequences of up to 9 nucleotides in length. The polypeptide is Transcription elongation factor GreB (Escherichia coli O157:H7).